The following is a 310-amino-acid chain: Transcriptional activator BRRF1 (310 aa).

Belongs to the lymphocryptovirus BBRF1 family.

Functionally, enhances the ability of BRLF1 to induce lytic infection by cooperating with it to transcriptionally activate the BZLF1 promoter. The sequence is that of Transcriptional activator BRRF1 from Epstein-Barr virus (strain AG876) (HHV-4).